Here is a 212-residue protein sequence, read N- to C-terminus: Thiamine-phosphate synthase (212 aa).

4-amino-2-methyl-5-(diphosphooxymethyl)pyrimidine contacts are provided by residues 39–43 (QLRIK) and Asn-71. Residues Asp-72 and Asp-91 each contribute to the Mg(2+) site. Ser-110 contacts 4-amino-2-methyl-5-(diphosphooxymethyl)pyrimidine. 136–138 (TQT) lines the 2-[(2R,5Z)-2-carboxy-4-methylthiazol-5(2H)-ylidene]ethyl phosphate pocket. 4-amino-2-methyl-5-(diphosphooxymethyl)pyrimidine is bound at residue Lys-139. 2-[(2R,5Z)-2-carboxy-4-methylthiazol-5(2H)-ylidene]ethyl phosphate-binding positions include Gly-168 and 188-189 (VS).

This sequence belongs to the thiamine-phosphate synthase family. The cofactor is Mg(2+).

The catalysed reaction is 2-[(2R,5Z)-2-carboxy-4-methylthiazol-5(2H)-ylidene]ethyl phosphate + 4-amino-2-methyl-5-(diphosphooxymethyl)pyrimidine + 2 H(+) = thiamine phosphate + CO2 + diphosphate. It carries out the reaction 2-(2-carboxy-4-methylthiazol-5-yl)ethyl phosphate + 4-amino-2-methyl-5-(diphosphooxymethyl)pyrimidine + 2 H(+) = thiamine phosphate + CO2 + diphosphate. The enzyme catalyses 4-methyl-5-(2-phosphooxyethyl)-thiazole + 4-amino-2-methyl-5-(diphosphooxymethyl)pyrimidine + H(+) = thiamine phosphate + diphosphate. The protein operates within cofactor biosynthesis; thiamine diphosphate biosynthesis; thiamine phosphate from 4-amino-2-methyl-5-diphosphomethylpyrimidine and 4-methyl-5-(2-phosphoethyl)-thiazole: step 1/1. Functionally, condenses 4-methyl-5-(beta-hydroxyethyl)thiazole monophosphate (THZ-P) and 2-methyl-4-amino-5-hydroxymethyl pyrimidine pyrophosphate (HMP-PP) to form thiamine monophosphate (TMP). The chain is Thiamine-phosphate synthase from Serratia proteamaculans (strain 568).